Here is a 212-residue protein sequence, read N- to C-terminus: Putative tyrosine-protein phosphatase R622 (212 aa).

In terms of domain architecture, Tyrosine-protein phosphatase spans 9–191 (KISQVTNNIF…LQGYQSKKEN (183 aa)). The Phosphocysteine intermediate role is filled by cysteine 135.

It belongs to the protein-tyrosine phosphatase family. Non-receptor class dual specificity subfamily.

It carries out the reaction O-phospho-L-tyrosyl-[protein] + H2O = L-tyrosyl-[protein] + phosphate. This chain is Putative tyrosine-protein phosphatase R622, found in Acanthamoeba polyphaga mimivirus (APMV).